The sequence spans 395 residues: Inactive serine protease 54 (395 aa).

Positions 1-30 (MVSAAGLSGDGKMRGVLLVLLGLLYSSTSC) are cleaved as a signal peptide. In terms of domain architecture, Peptidase S1 spans 37–269 (VFYGPDPKEG…YSKWITSKAE (233 aa)). N-linked (GlcNAc...) asparagine glycosylation is present at Asn123. Cystine bridges form between Cys164–Cys227, Cys195–Cys205, and Cys217–Cys248. Positions 324 to 348 (RLGNSSRDSLDVREKDVKESGRSPE) are disordered. Asn327 is a glycosylation site (N-linked (GlcNAc...) asparagine). A compositionally biased stretch (basic and acidic residues) spans 331–345 (DSLDVREKDVKESGR).

This sequence belongs to the peptidase S1 family. Plasma kallikrein subfamily.

It localises to the secreted. This is Inactive serine protease 54 (PRSS54) from Homo sapiens (Human).